Consider the following 381-residue polypeptide: E3 ubiquitin-protein ligase Fancl (381 aa).

The tract at residues 110 to 293 is UBC-RWD region (URD); the sequence is NIYYDILALY…MFDLCYFPMP (184 aa). An RING-CH-type; degenerate zinc finger spans residues 303–374; the sequence is EEDNEELRCN…PFCKAKLSTS (72 aa). Residues Cys311, Cys314, Cys329, Cys334, His339, Cys342, Cys364, and Cys367 each coordinate Zn(2+).

In terms of assembly, interacts (via C-terminus) with FANCI and Fancd2.

It localises to the nucleus. It carries out the reaction S-ubiquitinyl-[E2 ubiquitin-conjugating enzyme]-L-cysteine + [acceptor protein]-L-lysine = [E2 ubiquitin-conjugating enzyme]-L-cysteine + N(6)-ubiquitinyl-[acceptor protein]-L-lysine.. It functions in the pathway protein modification; protein ubiquitination. Its function is as follows. Ubiquitin ligase protein that mediates monoubiquitination of Fancd2. Ubiquitination of Fancd2 is stimulated by ionising radiation. Together with Fancd2, and probably FANCI, involved in DNA repair of damage caused by agents that induce interstrand cross-links but not agents that cause double strand breaks. The polypeptide is E3 ubiquitin-protein ligase Fancl (Drosophila melanogaster (Fruit fly)).